We begin with the raw amino-acid sequence, 200 residues long: NADH-ubiquinone oxidoreductase 21.3 kDa subunit (200 aa).

3 consecutive transmembrane segments (helical) span residues 16–36 (IKSGVSGALFSGGAGLLMASL), 48–68 (MHVFTHGGGTIISFTLAGGIY), and 105–125 (FPVILGFGAMAGSVVGAFAFS).

In terms of assembly, complex I is composed of about 40 different subunits.

The protein resides in the mitochondrion inner membrane. The enzyme catalyses a ubiquinone + NADH + 5 H(+)(in) = a ubiquinol + NAD(+) + 4 H(+)(out). In terms of biological role, transfer of electrons from NADH to the respiratory chain. The immediate electron acceptor for the enzyme is believed to be ubiquinone. The chain is NADH-ubiquinone oxidoreductase 21.3 kDa subunit from Neurospora crassa (strain ATCC 24698 / 74-OR23-1A / CBS 708.71 / DSM 1257 / FGSC 987).